A 149-amino-acid polypeptide reads, in one-letter code: Transcriptional repressor NrdR (149 aa).

A zinc finger spans residues 3–34; sequence CPFCSATDTKVIDSRLVADGHQVRRRRECAEC. Positions 49–139 constitute an ATP-cone domain; the sequence is PRVVKQDGSR…VYRAFEDVSE (91 aa).

Belongs to the NrdR family. Zn(2+) serves as cofactor.

Negatively regulates transcription of bacterial ribonucleotide reductase nrd genes and operons by binding to NrdR-boxes. The protein is Transcriptional repressor NrdR of Shewanella sediminis (strain HAW-EB3).